Here is an 88-residue protein sequence, read N- to C-terminus: Phosphocarrier protein HPr (88 aa).

The 88-residue stretch at 1-88 (MAEKTFKVVS…DTLAKEGLAE (88 aa)) folds into the HPr domain. Ser12 carries the phosphoserine modification. His15 functions as the Pros-phosphohistidine intermediate in the catalytic mechanism. Ser46 carries the phosphoserine; by HPrK/P modification.

It belongs to the HPr family.

The protein localises to the cytoplasm. With respect to regulation, phosphorylation on Ser-46 inhibits the phosphoryl transfer from enzyme I to HPr. Its function is as follows. General (non sugar-specific) component of the phosphoenolpyruvate-dependent sugar phosphotransferase system (sugar PTS). This major carbohydrate active-transport system catalyzes the phosphorylation of incoming sugar substrates concomitantly with their translocation across the cell membrane. The phosphoryl group from phosphoenolpyruvate (PEP) is transferred to the phosphoryl carrier protein HPr by enzyme I. Phospho-HPr then transfers it to the PTS EIIA domain. Functionally, P-Ser-HPr interacts with the catabolite control protein A (CcpA), forming a complex that binds to DNA at the catabolite response elements cre, operator sites preceding a large number of catabolite-regulated genes. Thus, P-Ser-HPr is a corepressor in carbon catabolite repression (CCR), a mechanism that allows bacteria to coordinate and optimize the utilization of available carbon sources. P-Ser-HPr also plays a role in inducer exclusion, in which it probably interacts with several non-PTS permeases and inhibits their transport activity. This chain is Phosphocarrier protein HPr (ptsH), found in Geobacillus stearothermophilus (Bacillus stearothermophilus).